The following is a 67-amino-acid chain: DNA-directed RNA polymerase subunit omega (67 aa).

Belongs to the RNA polymerase subunit omega family. As to quaternary structure, the RNAP catalytic core consists of 2 alpha, 1 beta, 1 beta' and 1 omega subunit. When a sigma factor is associated with the core the holoenzyme is formed, which can initiate transcription.

It catalyses the reaction RNA(n) + a ribonucleoside 5'-triphosphate = RNA(n+1) + diphosphate. In terms of biological role, promotes RNA polymerase assembly. Latches the N- and C-terminal regions of the beta' subunit thereby facilitating its interaction with the beta and alpha subunits. In Methylibium petroleiphilum (strain ATCC BAA-1232 / LMG 22953 / PM1), this protein is DNA-directed RNA polymerase subunit omega.